We begin with the raw amino-acid sequence, 295 residues long: MLDQDLDDIHPLFQGAPQTTEFKKLRKRIVRYTREAVEQYGMVERREDGSLPKWLVCLSGGKDSYTLLAVLYELKWRGLLPVDLLACNLDQGQPGFPATVLPEFLEKMQVPHRIEYQDTYSIVMDKVPQGRTYCALCSRLRRGNLYRIAREEGCSAVVLGHHRDDILETFFMNLFHGGRLATMPPKLVNEEGDLFVFRPLAHVAEADCEKFARAMNYPIIPCDLCGSQDGLQRQQVKQILDTWESNSPGRRQVMFRALMNARPSHLLDPKLFDFTGLALKNIDNSTETEEIPELR.

A PP-loop motif motif is present at residues 59-64; sequence SGGKDS. Positions 134, 137, and 225 each coordinate [4Fe-4S] cluster.

This sequence belongs to the TtcA family. In terms of assembly, homodimer. Mg(2+) serves as cofactor. [4Fe-4S] cluster is required as a cofactor.

The protein localises to the cytoplasm. It catalyses the reaction cytidine(32) in tRNA + S-sulfanyl-L-cysteinyl-[cysteine desulfurase] + AH2 + ATP = 2-thiocytidine(32) in tRNA + L-cysteinyl-[cysteine desulfurase] + A + AMP + diphosphate + H(+). It functions in the pathway tRNA modification. Its function is as follows. Catalyzes the ATP-dependent 2-thiolation of cytidine in position 32 of tRNA, to form 2-thiocytidine (s(2)C32). The sulfur atoms are provided by the cysteine/cysteine desulfurase (IscS) system. The sequence is that of tRNA-cytidine(32) 2-sulfurtransferase from Ruegeria sp. (strain TM1040) (Silicibacter sp.).